The sequence spans 359 residues: DNA replication and repair protein RecF (359 aa).

30 to 37 (GKNGIGKT) is an ATP binding site.

It belongs to the RecF family.

The protein resides in the cytoplasm. Functionally, the RecF protein is involved in DNA metabolism; it is required for DNA replication and normal SOS inducibility. RecF binds preferentially to single-stranded, linear DNA. It also seems to bind ATP. The chain is DNA replication and repair protein RecF from Flavobacterium johnsoniae (strain ATCC 17061 / DSM 2064 / JCM 8514 / BCRC 14874 / CCUG 350202 / NBRC 14942 / NCIMB 11054 / UW101) (Cytophaga johnsonae).